The sequence spans 328 residues: GATA transcription factor 17 (328 aa).

Residues 1-68 (MSGHHEAKPY…EEYEGGEGVP (68 aa)) form a disordered region. Low complexity predominate over residues 14-29 (RGPAPADEEAAPAAAA). Acidic residues-rich tracts occupy residues 30–39 (DEAEAEAEVE) and 47–63 (EQEY…EYEG). The Tify domain maps to 100–135 (PHVASNTLTLSFQGEVYVFESVSAERVQAVLLLLGG). One can recognise a CCT domain in the interval 161–203 (RMASLMRFREKRKERNFDKKIRYTVRKEVALRMQRNRGQFTSS). The segment at 198 to 231 (GQFTSSKSKAEEATSVITSSEGSPNWGAVEGRPP) is disordered. The segment at 236–263 (CHHCGISAASTPMMRRGPDGPRTLCNAC) adopts a GATA-type zinc-finger fold.

This sequence belongs to the type IV zinc-finger family. Class C subfamily.

Its subcellular location is the nucleus. Its function is as follows. Transcriptional activator that specifically binds 5'-GATA-3' or 5'-GAT-3' motifs within gene promoters. In Oryza sativa subsp. japonica (Rice), this protein is GATA transcription factor 17.